The sequence spans 89 residues: Small ribosomal subunit protein uS17 (89 aa).

The protein belongs to the universal ribosomal protein uS17 family. Part of the 30S ribosomal subunit.

One of the primary rRNA binding proteins, it binds specifically to the 5'-end of 16S ribosomal RNA. This chain is Small ribosomal subunit protein uS17, found in Chlorobium chlorochromatii (strain CaD3).